A 256-amino-acid chain; its full sequence is Small ribosomal subunit protein uS2 (256 aa).

This sequence belongs to the universal ribosomal protein uS2 family.

In Streptococcus agalactiae serotype III (strain NEM316), this protein is Small ribosomal subunit protein uS2.